The chain runs to 586 residues: CTP synthase (586 aa).

Residues 1–278 (MRKHPQTATK…DAFVVRRLNL (278 aa)) are amidoligase domain. S20 lines the CTP pocket. S20 provides a ligand contact to UTP. Residues 21-26 (SLGKGL) and D78 contribute to the ATP site. Mg(2+) is bound by residues D78 and E152. Residues 159 to 161 (DIE), 199 to 204 (KTKPTQ), and K235 each bind CTP. UTP contacts are provided by residues 199-204 (KTKPTQ) and K235. Residues 303 to 551 (RIALVGKYVE…VGAAIDYKAG (249 aa)) form the Glutamine amidotransferase type-1 domain. G366 is a binding site for L-glutamine. C393 acts as the Nucleophile; for glutamine hydrolysis in catalysis. L-glutamine is bound by residues 394-397 (LGLQ), E416, and R477. Catalysis depends on residues H524 and E526. Positions 560–586 (EIPEHTPNGSSHRDGVGQPLPEPASRG) are disordered.

This sequence belongs to the CTP synthase family. As to quaternary structure, homotetramer.

The enzyme catalyses UTP + L-glutamine + ATP + H2O = CTP + L-glutamate + ADP + phosphate + 2 H(+). It carries out the reaction L-glutamine + H2O = L-glutamate + NH4(+). The catalysed reaction is UTP + NH4(+) + ATP = CTP + ADP + phosphate + 2 H(+). It participates in pyrimidine metabolism; CTP biosynthesis via de novo pathway; CTP from UDP: step 2/2. With respect to regulation, allosterically activated by GTP, when glutamine is the substrate; GTP has no effect on the reaction when ammonia is the substrate. The allosteric effector GTP functions by stabilizing the protein conformation that binds the tetrahedral intermediate(s) formed during glutamine hydrolysis. Inhibited by the product CTP, via allosteric rather than competitive inhibition. In terms of biological role, catalyzes the ATP-dependent amination of UTP to CTP with either L-glutamine or ammonia as the source of nitrogen. Regulates intracellular CTP levels through interactions with the four ribonucleotide triphosphates. The protein is CTP synthase of Mycobacterium tuberculosis (strain ATCC 25177 / H37Ra).